Here is a 154-residue protein sequence, read N- to C-terminus: Aspartate carbamoyltransferase regulatory chain (154 aa).

The Zn(2+) site is built by Cys109, Cys114, Cys138, and Cys141.

The protein belongs to the PyrI family. As to quaternary structure, contains catalytic and regulatory chains. It depends on Zn(2+) as a cofactor.

Involved in allosteric regulation of aspartate carbamoyltransferase. The sequence is that of Aspartate carbamoyltransferase regulatory chain from Aeromonas salmonicida (strain A449).